The following is a 274-amino-acid chain: MKKQPIGFMDSGVGGLTLVKEARKRLPNEDMVFIGDQARLPYGEKPAATVREFAWQMANFLRHQEIKALVIACNTATAAALPDLQAQLAIPVIGVIKPGSIAALQTTHNRRVGVIATTGTIQSAAYSQQMAALNPDVQVTGLAAPQFVTMIEANQRHGQAVQTIVNQILQPLQKSEIDTLVLGCTHFPLLTTAIQTAVGPDVTLVNPAVQAITMLEEVLTQQQQLATTTPGTLRMYTTGSVAAFEEIAQQWLAQPDLTAQQVDIQKEKNDGPDR.

Residues 10–11 (DS) and 42–43 (YG) each bind substrate. Residue cysteine 73 is the Proton donor/acceptor of the active site. 74–75 (NT) provides a ligand contact to substrate. Cysteine 184 serves as the catalytic Proton donor/acceptor. 185–186 (TH) provides a ligand contact to substrate.

It belongs to the aspartate/glutamate racemases family.

The catalysed reaction is L-glutamate = D-glutamate. The protein operates within cell wall biogenesis; peptidoglycan biosynthesis. Functionally, provides the (R)-glutamate required for cell wall biosynthesis. The protein is Glutamate racemase of Latilactobacillus sakei subsp. sakei (strain 23K) (Lactobacillus sakei subsp. sakei).